The primary structure comprises 261 residues: Small ribosomal subunit protein eS1 (261 aa).

A compositionally biased stretch (basic residues) spans 1-18; the sequence is MAVGKNKRISKGKKGGKK. The tract at residues 1 to 23 is disordered; that stretch reads MAVGKNKRISKGKKGGKKKAADP.

It belongs to the eukaryotic ribosomal protein eS1 family. In terms of assembly, component of the small ribosomal subunit. Mature ribosomes consist of a small (40S) and a large (60S) subunit. The 40S subunit contains about 33 different proteins and 1 molecule of RNA (18S). The 60S subunit contains about 49 different proteins and 3 molecules of RNA (25S, 5.8S and 5S).

It is found in the cytoplasm. The chain is Small ribosomal subunit protein eS1 (cyc07) from Nicotiana tabacum (Common tobacco).